Reading from the N-terminus, the 581-residue chain is Moesin/ezrin/radixin homolog 1 (581 aa).

One can recognise an FERM domain in the interval 8–298 (MNVRVTTMDA…GNHELYMRRR (291 aa)). Positions 452-519 (QVAKGSRAAA…EERRTLAERN (68 aa)) are disordered. The segment covering 459 to 469 (AAAALQAATTT) has biased composition (low complexity). Positions 477-486 (EEEENEEELI) are enriched in acidic residues. Residues 495 to 519 (FSKDFDTDEHIKDPVEERRTLAERN) show a composition bias toward basic and acidic residues. T562 bears the Phosphothreonine mark.

As to quaternary structure, interacts with cytoskeletal actin.

It localises to the cell junction. It is found in the adherens junction. The protein resides in the cell projection. Its subcellular location is the microvillus. The protein localises to the rhabdomere. It localises to the cell membrane. It is found in the cytoplasm. The protein resides in the cytoskeleton. Its function is as follows. Involved in connections of major cytoskeletal structures to the plasma membrane. This chain is Moesin/ezrin/radixin homolog 1, found in Anopheles gambiae (African malaria mosquito).